We begin with the raw amino-acid sequence, 270 residues long: Zinc finger protein ZAT2 (270 aa).

Polar residues-rich tracts occupy residues 1-28 (MSNT…YNQN) and 36-48 (LTNN…SSSP). The interval 1–64 (MSNTSNSDPN…QPDPDASQIA (64 aa)) is disordered. The C2H2-type 1 zinc-finger motif lies at 65 to 87 (RPCTECGKQFGSLKALFGHMRCH). The interval 95 to 119 (INPPSNFKRRINSNAASSSSSWDPS) is disordered. The segment covering 106–115 (NSNAASSSSS) has biased composition (low complexity). 2 consecutive C2H2-type zinc fingers follow at residues 148–170 (FECD…RATH) and 211–233 (HRCN…MRCH).

Interacts (via the EAR motif) with TPL. As to expression, expressed exclusively in pollen.

The protein resides in the nucleus. Mediates the regulation of male germ cell division by DUO1. This chain is Zinc finger protein ZAT2, found in Arabidopsis thaliana (Mouse-ear cress).